The sequence spans 102 residues: NADH-quinone oxidoreductase subunit K 2 (102 aa).

Transmembrane regions (helical) follow at residues 5 to 25, 30 to 50, and 65 to 85; these read FEHVLILAGLLFALGLVCVLV, LIMLLIGIEVMLNAAMLAFVG, and LIIMALTSAEVSLALAMVVYL.

The protein belongs to the complex I subunit 4L family. In terms of assembly, NDH-1 is composed of 14 different subunits. Subunits NuoA, H, J, K, L, M, N constitute the membrane sector of the complex.

Its subcellular location is the cell inner membrane. It catalyses the reaction a quinone + NADH + 5 H(+)(in) = a quinol + NAD(+) + 4 H(+)(out). Functionally, NDH-1 shuttles electrons from NADH, via FMN and iron-sulfur (Fe-S) centers, to quinones in the respiratory chain. The immediate electron acceptor for the enzyme in this species is believed to be ubiquinone. Couples the redox reaction to proton translocation (for every two electrons transferred, four hydrogen ions are translocated across the cytoplasmic membrane), and thus conserves the redox energy in a proton gradient. In Geobacter sulfurreducens (strain ATCC 51573 / DSM 12127 / PCA), this protein is NADH-quinone oxidoreductase subunit K 2.